We begin with the raw amino-acid sequence, 388 residues long: Succinate--CoA ligase [ADP-forming] subunit beta (388 aa).

The region spanning 9–244 (KSLFAEYGLP…PSQDDAREAH (236 aa)) is the ATP-grasp domain. ATP-binding positions include Lys46, 53–55 (GRG), Glu99, Thr102, and Glu107. The Mg(2+) site is built by Asn199 and Asp213. Substrate contacts are provided by residues Asn264 and 321 to 323 (GIV).

This sequence belongs to the succinate/malate CoA ligase beta subunit family. In terms of assembly, heterotetramer of two alpha and two beta subunits. Mg(2+) serves as cofactor.

It carries out the reaction succinate + ATP + CoA = succinyl-CoA + ADP + phosphate. The enzyme catalyses GTP + succinate + CoA = succinyl-CoA + GDP + phosphate. The protein operates within carbohydrate metabolism; tricarboxylic acid cycle; succinate from succinyl-CoA (ligase route): step 1/1. In terms of biological role, succinyl-CoA synthetase functions in the citric acid cycle (TCA), coupling the hydrolysis of succinyl-CoA to the synthesis of either ATP or GTP and thus represents the only step of substrate-level phosphorylation in the TCA. The beta subunit provides nucleotide specificity of the enzyme and binds the substrate succinate, while the binding sites for coenzyme A and phosphate are found in the alpha subunit. This chain is Succinate--CoA ligase [ADP-forming] subunit beta, found in Shewanella denitrificans (strain OS217 / ATCC BAA-1090 / DSM 15013).